Consider the following 279-residue polypeptide: Phosphatidylglycerol--prolipoprotein diacylglyceryl transferase (279 aa).

4 consecutive transmembrane segments (helical) span residues 4–24 (IGPLAIRWYGVLLTLAIFLGY), 44–64 (VVFWAVVFGVVGARLGYVLTS), 76–96 (LYIWHGGLSFHGAILGGGLTF), and 104–124 (GYPLWPYLDAATPGVALGIVA). Arginine 126 contributes to the a 1,2-diacyl-sn-glycero-3-phospho-(1'-sn-glycerol) binding site. Transmembrane regions (helical) follow at residues 182 to 202 (LTQVYGAVVGLILLFLSLYWL), 206 to 226 (PFYGYAFWQFVLWYSVLRSVL), and 245 to 265 (LGIGLFTATQVVSLPLVLLSL).

It belongs to the Lgt family.

The protein resides in the cell inner membrane. It carries out the reaction L-cysteinyl-[prolipoprotein] + a 1,2-diacyl-sn-glycero-3-phospho-(1'-sn-glycerol) = an S-1,2-diacyl-sn-glyceryl-L-cysteinyl-[prolipoprotein] + sn-glycerol 1-phosphate + H(+). It functions in the pathway protein modification; lipoprotein biosynthesis (diacylglyceryl transfer). Catalyzes the transfer of the diacylglyceryl group from phosphatidylglycerol to the sulfhydryl group of the N-terminal cysteine of a prolipoprotein, the first step in the formation of mature lipoproteins. The polypeptide is Phosphatidylglycerol--prolipoprotein diacylglyceryl transferase (Thermus thermophilus (strain ATCC 27634 / DSM 579 / HB8)).